A 568-amino-acid chain; its full sequence is Potassium-transporting ATPase potassium-binding subunit (568 aa).

12 helical membrane-spanning segments follow: residues 7-27 (LLIT…GNII), 67-87 (YALA…TLLV), 137-157 (GLTV…FALI), 180-200 (LYLL…QGVI), 258-278 (FIQI…FGQV), 288-308 (LLWA…YAEL), 332-352 (FGIL…CGAV), 361-381 (ALGG…FGGV), 384-404 (GLYG…LMIG), 421-441 (MVAL…ALTI), 488-508 (LLLA…VLAI), and 535-555 (LLIL…LILG).

It belongs to the KdpA family. The system is composed of three essential subunits: KdpA, KdpB and KdpC.

The protein localises to the cell inner membrane. Part of the high-affinity ATP-driven potassium transport (or Kdp) system, which catalyzes the hydrolysis of ATP coupled with the electrogenic transport of potassium into the cytoplasm. This subunit binds the periplasmic potassium ions and delivers the ions to the membrane domain of KdpB through an intramembrane tunnel. The protein is Potassium-transporting ATPase potassium-binding subunit of Photorhabdus laumondii subsp. laumondii (strain DSM 15139 / CIP 105565 / TT01) (Photorhabdus luminescens subsp. laumondii).